The sequence spans 450 residues: Protein tweety homolog 1 (450 aa).

At 1–43 (MGAPPGYRPSAWVHLLHQLPRADFQLRPVPSAFAPQEREYQQA) the chain is on the extracellular side. A helical transmembrane segment spans residues 44–64 (LLLVAALAGLGLGLSLIFIAV). Residues 65-88 (YLIRFCCCRPPEPPGAKSPPPGGG) lie on the Cytoplasmic side of the membrane. A helical membrane pass occupies residues 89–109 (CVTWNCIAALLVGCAGIGVGF). At 110-214 (YGNSETSDGV…DVSFVEEYRW (105 aa)) the chain is on the extracellular side. N-linked (GlcNAc...) asparagine glycosylation is present at Asn130. Residues 215–235 (LAYVLLLLLELLVCLFTLLGL) form a helical membrane-spanning segment. Topologically, residues 236 to 240 (ARQSK) are cytoplasmic. A helical membrane pass occupies residues 241-261 (WLVIVMTVMSLLVLVLSWGSM). The Extracellular segment spans residues 262–390 (GLEAATAVGL…LRGLCEDTLE (129 aa)). Disulfide bonds link Cys275/Cys385 and Cys303/Cys370. Residues Asn284 and Asn355 are each glycosylated (N-linked (GlcNAc...) asparagine). The chain crosses the membrane as a helical span at residues 391 to 411 (GLLFLLLFSLLSAGALATVLC). Over 412 to 450 (SLPRAWALFPPSDDYEDTDDDDPFNPQESKRFVQWQSSI) the chain is Cytoplasmic. The tract at residues 427–450 (EDTDDDDPFNPQESKRFVQWQSSI) is disordered. Position 440 is a phosphoserine (Ser440).

Belongs to the tweety family. In terms of assembly, homotetramer; disulfide-linked. Homodimer. Post-translationally, N-glycosylated. Contains high-mannose, hybrid and complex oligosaccharides.

It is found in the cell membrane. It catalyses the reaction chloride(in) = chloride(out). The catalysed reaction is L-glutamate(out) = L-glutamate(in). Calcium-independent, swelling-dependent volume-regulated anion channel (VRAC-swell) which plays a pivotal role in the process of regulatory volume decrease (RVD) in the brain through the efflux of anions like chloride and organic osmolytes like glutamate. In Bos taurus (Bovine), this protein is Protein tweety homolog 1 (TTYH1).